The following is a 254-amino-acid chain: Probable glutathione transferase omega-2 (254 aa).

The GST N-terminal domain occupies 25–105; the sequence is GTIRIYNMRY…YLDDIYPEPR (81 aa). Catalysis depends on Cys35, which acts as the Nucleophile. Glutathione-binding positions include Lys62, Val75, and 89–90; that span reads ES. The GST C-terminal domain maps to 110 to 239; the sequence is DHYEKVQQKL…SQPTETAVEF (130 aa).

It belongs to the GST superfamily. Omega family.

It carries out the reaction RX + glutathione = an S-substituted glutathione + a halide anion + H(+). The enzyme catalyses L-dehydroascorbate + 2 glutathione = glutathione disulfide + L-ascorbate. It catalyses the reaction methylarsonate + 2 glutathione + H(+) = methylarsonous acid + glutathione disulfide + H2O. In terms of biological role, exhibits glutathione-dependent thiol transferase activity. Has dehydroascorbate reductase activity and may contribute to the recycling of ascorbic acid. Participates in the biotransformation of inorganic arsenic and reduces monomethylarsonic acid (MMA). This is Probable glutathione transferase omega-2 (gsto-2) from Caenorhabditis elegans.